Here is a 372-residue protein sequence, read N- to C-terminus: Alanine racemase (372 aa).

Catalysis depends on Lys-33, which acts as the Proton acceptor; specific for D-alanine. An N6-(pyridoxal phosphate)lysine modification is found at Lys-33. Residue Arg-131 coordinates substrate. Tyr-261 acts as the Proton acceptor; specific for L-alanine in catalysis. Substrate is bound at residue Met-309.

The protein belongs to the alanine racemase family. Requires pyridoxal 5'-phosphate as cofactor.

It catalyses the reaction L-alanine = D-alanine. It participates in amino-acid biosynthesis; D-alanine biosynthesis; D-alanine from L-alanine: step 1/1. Catalyzes the interconversion of L-alanine and D-alanine. May also act on other amino acids. This is Alanine racemase (alr) from Salinispora tropica (strain ATCC BAA-916 / DSM 44818 / JCM 13857 / NBRC 105044 / CNB-440).